A 363-amino-acid polypeptide reads, in one-letter code: Cell division cycle-associated protein 3 (363 aa).

Polar residues predominate over residues 1–12; it reads MGSAESKAQVTP. Disordered regions lie at residues 1–81, 126–152, 191–210, and 231–363; these read MGSA…TPLR, VESQ…KAET, MNDQ…EESP, and ENLN…HSNS. Positions 93-152 are F-box-like; it reads KQLSEVFVAEDSSTEGGPLGFTGPEATNLERQVVESQTAPPAGEHVNDHEVEPSVEKAET. Positions 137 to 152 are enriched in basic and acidic residues; sequence HVNDHEVEPSVEKAET. A compositionally biased stretch (acidic residues) spans 192-210; that stretch reads NDQEESPIAETMNDQEESP. Positions 259 to 285 are enriched in polar residues; sequence SVVSTESTQATGQQQKTRGKSPRSSGV. The span at 296 to 308 shows a compositional bias: low complexity; the sequence is LLSSSSGRSPLRI. A compositionally biased stretch (polar residues) spans 311–321; the sequence is EDNSPNTNTQH. Residues 353–355 carry the KEN box motif; the sequence is KEN.

In terms of assembly, interacts with wee1, when wee1 is phosphorylated at 'Ser-38'. Post-translationally, phosphorylated. Ubiquitinated and degraded by the APC/C-Cdh1 complex during G1 phase.

Its subcellular location is the cytoplasm. The protein resides in the cytosol. The protein operates within protein modification; protein ubiquitination. Its function is as follows. F-box-like protein which is required for entry into mitosis. Acts by participating in E3 ligase complexes that mediate the ubiquitination and degradation of WEE1 kinase at G2/M phase. The sequence is that of Cell division cycle-associated protein 3 (cdca3) from Xenopus laevis (African clawed frog).